We begin with the raw amino-acid sequence, 349 residues long: 11-beta-hydroxysteroid dehydrogenase A (349 aa).

The chain crosses the membrane as a helical; Signal-anchor for type II membrane protein span at residues 10-30; sequence LVAPPFTFFFLCLFLPPYWGL. Positions 13–26 match the Proline-knob motif; that stretch reads PPFTFFFLCLFLPP. Residues 54–80, aspartate 105, and 132–135 contribute to the NADP(+) site; these read GASS…SARR and NAAI. Residue serine 184 participates in substrate binding. Tyrosine 197 (proton acceptor) is an active-site residue. Residues 197–201 and lysine 201 contribute to the NADP(+) site; that span reads YSASK.

Belongs to the short-chain dehydrogenases/reductases (SDR) family. As to expression, expressed in seeds (at protein level).

Its subcellular location is the lipid droplet. The protein resides in the membrane. The catalysed reaction is an 11beta-hydroxysteroid + NADP(+) = an 11-oxosteroid + NADPH + H(+). In terms of biological role, has dehydrogenase activity against 11 beta-hydroxysteroid and 17 beta-hydroxysteroid. May be involved in signal transduction regulated by various sterols. The chain is 11-beta-hydroxysteroid dehydrogenase A from Arachis hypogaea (Peanut).